We begin with the raw amino-acid sequence, 1161 residues long: DNA-directed RNA polymerase subunit beta (1161 aa).

Belongs to the RNA polymerase beta chain family. The RNAP catalytic core consists of 2 alpha, 1 beta, 1 beta' and 1 omega subunit. When a sigma factor is associated with the core the holoenzyme is formed, which can initiate transcription.

It catalyses the reaction RNA(n) + a ribonucleoside 5'-triphosphate = RNA(n+1) + diphosphate. DNA-dependent RNA polymerase catalyzes the transcription of DNA into RNA using the four ribonucleoside triphosphates as substrates. In Streptomyces avermitilis (strain ATCC 31267 / DSM 46492 / JCM 5070 / NBRC 14893 / NCIMB 12804 / NRRL 8165 / MA-4680), this protein is DNA-directed RNA polymerase subunit beta.